Here is a 644-residue protein sequence, read N- to C-terminus: Chaperone protein DnaK (644 aa).

Position 195 is a phosphothreonine; by autocatalysis (Thr-195). The segment at 598 to 644 (KQAAPGAGAPGAGPGPEAAGGAQQAQAEPKKDEGVIDAEYVDVDEKK) is disordered. Residues 612–624 (GPEAAGGAQQAQA) show a composition bias toward low complexity. Acidic residues predominate over residues 632 to 644 (VIDAEYVDVDEKK).

The protein belongs to the heat shock protein 70 family.

Functionally, acts as a chaperone. The sequence is that of Chaperone protein DnaK from Koribacter versatilis (strain Ellin345).